We begin with the raw amino-acid sequence, 98 residues long: Defensin (98 aa).

Positions 1–19 (MRTFLVTFVLVVVVGVISA) are cleaved as a signal peptide. Positions 20–58 (YPSNPVEVEAEDFDAQDPDLQTFQDTFYEVPQVHSRQKR) are excised as a propeptide. Intrachain disulfides connect C61–C88, C74–C94, and C78–C96.

Is synthesized by the fat body and eventually secreted into the hemolymph.

The protein localises to the secreted. Its function is as follows. Has antiparasitic activity against promastigote forms of L.major, and antibacterial activity against Gram-positive bacterium S.aureus. Has antifungal activity against the yeasts C.albicans and S.cerevisiae, but not C.glabrata. Has antifungal activity against filamentous fungi A.fumigatus, F.culmorum, F.oxysporum, N.crassa, T.viride and T.mentagrophytes, but not B.bassiana. This is Defensin from Phlebotomus duboscqi (Sandfly).